Reading from the N-terminus, the 297-residue chain is N-acetylmuramic acid 6-phosphate etherase (297 aa).

The 164-residue stretch at 56–219 (AIEAFNKGGR…STISMIGIGK (164 aa)) folds into the SIS domain. Glu84 functions as the Proton donor in the catalytic mechanism. Glu115 is an active-site residue.

The protein belongs to the GCKR-like family. MurNAc-6-P etherase subfamily. Homodimer.

It carries out the reaction N-acetyl-D-muramate 6-phosphate + H2O = N-acetyl-D-glucosamine 6-phosphate + (R)-lactate. The protein operates within amino-sugar metabolism; N-acetylmuramate degradation. In terms of biological role, specifically catalyzes the cleavage of the D-lactyl ether substituent of MurNAc 6-phosphate, producing GlcNAc 6-phosphate and D-lactate. This chain is N-acetylmuramic acid 6-phosphate etherase, found in Lactococcus lactis subsp. cremoris (strain MG1363).